A 396-amino-acid polypeptide reads, in one-letter code: Ribosomal RNA large subunit methyltransferase I (396 aa).

The 78-residue stretch at 2 to 79 folds into the PUA domain; sequence AVRIKLKPGR…REEEIDREFF (78 aa).

It belongs to the methyltransferase superfamily. RlmI family.

The protein localises to the cytoplasm. The enzyme catalyses cytidine(1962) in 23S rRNA + S-adenosyl-L-methionine = 5-methylcytidine(1962) in 23S rRNA + S-adenosyl-L-homocysteine + H(+). Its function is as follows. Specifically methylates the cytosine at position 1962 (m5C1962) of 23S rRNA. The chain is Ribosomal RNA large subunit methyltransferase I from Shewanella sp. (strain MR-7).